A 153-amino-acid chain; its full sequence is Ribosome maturation factor RimP (153 aa).

This sequence belongs to the RimP family.

Its subcellular location is the cytoplasm. Its function is as follows. Required for maturation of 30S ribosomal subunits. The sequence is that of Ribosome maturation factor RimP from Clostridium botulinum (strain Alaska E43 / Type E3).